We begin with the raw amino-acid sequence, 220 residues long: uncharacterized protein (220 aa).

4 helical membrane passes run 61–81, 85–105, 115–135, and 150–170; these read LISVLTIPFYVAIIIFISFFG, SVMFSVIILGSVLISTCYGAF, FVIIQLVFLIYDLILITILLL, and LPLEDIPFGTDQVLLGCSLLL.

It localises to the membrane. This is an uncharacterized protein from Caenorhabditis elegans.